We begin with the raw amino-acid sequence, 110 residues long: Acylphosphatase (110 aa).

The Acylphosphatase-like domain occupies 20–108 (RAHIFVRGKV…GEFNDFSILP (89 aa)). Active-site residues include arginine 35 and asparagine 53.

The protein belongs to the acylphosphatase family.

It carries out the reaction an acyl phosphate + H2O = a carboxylate + phosphate + H(+). This Pyrobaculum calidifontis (strain DSM 21063 / JCM 11548 / VA1) protein is Acylphosphatase (acyP).